The sequence spans 908 residues: Oxysterol-binding protein 2 (908 aa).

Positions 42 to 112 (SAFGSGPASK…GLWPGSENGT (71 aa)) are disordered. Residues 81–90 (EPGSQTTSVP) show a composition bias toward polar residues. Residues 179 to 271 (LDSYKGWLLK…WITALELAKA (93 aa)) form the PH domain. Disordered stretches follow at residues 279-299 (TQSDDSGDDDEEPAAPADNSE), 413-445 (RAFCNTPGGPASSSKSFSEGSFLTSKGENSEED), and 822-843 (LMERGRWDEANTEKQRLEEKQR). S284 is subject to Phosphoserine. Positions 424 to 437 (SSSKSFSEGSFLTS) are enriched in low complexity.

The protein belongs to the OSBP family. In terms of assembly, interacts with CCDC159. In terms of tissue distribution, expressed in the testis (at protein level). Expressed in postmeiotic germ cells of the testis.

The protein resides in the membrane. It localises to the cytoplasmic vesicle. Its subcellular location is the secretory vesicle. The protein localises to the acrosome. Functionally, binds 7-ketocholesterol. Acts during spermatid development where its function is required prior to the removal of cytoplasm from the sperm head. The polypeptide is Oxysterol-binding protein 2 (Osbp2) (Mus musculus (Mouse)).